A 178-amino-acid polypeptide reads, in one-letter code: Large ribosomal subunit protein uL5 (178 aa).

This sequence belongs to the universal ribosomal protein uL5 family. As to quaternary structure, part of the 50S ribosomal subunit; part of the 5S rRNA/L5/L18/L25 subcomplex. Contacts the 5S rRNA and the P site tRNA. Forms a bridge to the 30S subunit in the 70S ribosome.

Functionally, this is one of the proteins that bind and probably mediate the attachment of the 5S RNA into the large ribosomal subunit, where it forms part of the central protuberance. In the 70S ribosome it contacts protein S13 of the 30S subunit (bridge B1b), connecting the 2 subunits; this bridge is implicated in subunit movement. Contacts the P site tRNA; the 5S rRNA and some of its associated proteins might help stabilize positioning of ribosome-bound tRNAs. The chain is Large ribosomal subunit protein uL5 from Acinetobacter baumannii (strain AB0057).